A 460-amino-acid polypeptide reads, in one-letter code: Cation efflux system protein CusC (460 aa).

A signal peptide spans 1-17; the sequence is MSPCKLLPFCVALALTG. Residue Cys18 is the site of N-palmitoyl cysteine attachment. Cys18 is lipidated: S-diacylglycerol cysteine.

The protein belongs to the outer membrane factor (OMF) (TC 1.B.17) family. Homotrimer. Component of the cus efflux system composed of CusA, CusB, CusC and CusF.

The protein localises to the cell outer membrane. Forms pores that allow passive diffusion of cations across the outer membrane. Part of a cation efflux system that mediates resistance to copper and silver. This is Cation efflux system protein CusC (cusC) from Escherichia coli O6:H1 (strain CFT073 / ATCC 700928 / UPEC).